The following is a 421-amino-acid chain: Testin (421 aa).

The region spanning 92–199 (MILTNPVAAK…GDVKLPRDMN (108 aa)) is the PET domain. Disordered stretches follow at residues 133-164 (EKQP…PSKC) and 193-213 (KLPR…GGDR). Over residues 155–164 (PAHDQDPSKC) the composition is skewed to basic and acidic residues. 3 consecutive LIM zinc-binding domains span residues 234–297 (YSCY…CDSE), 299–359 (PRCA…NHAV), and 362–421 (QGCH…KMMS).

Belongs to the prickle / espinas / testin family. As to quaternary structure, interacts via LIM domain 1 with ZYX. Interacts (via LIM domain 3) with ENAH and VASP. Interacts with ALKBH4, talin, actin, alpha-actinin, GRIP1 and PXN. Interacts (via LIM domain 2) with ACTL7A (via N-terminus). Heterodimer with ACTL7A; the heterodimer interacts with ENAH to form a heterotrimer.

The protein localises to the cytoplasm. The protein resides in the cell junction. It localises to the focal adhesion. Its function is as follows. Scaffold protein that may play a role in cell adhesion, cell spreading and in the reorganization of the actin cytoskeleton. Plays a role in the regulation of cell proliferation. May act as a tumor suppressor. This is Testin (TES) from Ovis aries (Sheep).